The sequence spans 514 residues: Maturase K (514 aa).

This sequence belongs to the intron maturase 2 family. MatK subfamily.

It localises to the plastid. It is found in the chloroplast. In terms of biological role, usually encoded in the trnK tRNA gene intron. Probably assists in splicing its own and other chloroplast group II introns. In Acer monspessulanum (Montpellier maple), this protein is Maturase K.